A 262-amino-acid polypeptide reads, in one-letter code: Hydroxyethylthiazole kinase (262 aa).

Met-50 contacts substrate. 2 residues coordinate ATP: Arg-125 and Thr-171. Gly-198 is a substrate binding site.

It belongs to the Thz kinase family. Requires Mg(2+) as cofactor.

The enzyme catalyses 5-(2-hydroxyethyl)-4-methylthiazole + ATP = 4-methyl-5-(2-phosphooxyethyl)-thiazole + ADP + H(+). It functions in the pathway cofactor biosynthesis; thiamine diphosphate biosynthesis; 4-methyl-5-(2-phosphoethyl)-thiazole from 5-(2-hydroxyethyl)-4-methylthiazole: step 1/1. Catalyzes the phosphorylation of the hydroxyl group of 4-methyl-5-beta-hydroxyethylthiazole (THZ). This Shigella sonnei (strain Ss046) protein is Hydroxyethylthiazole kinase.